We begin with the raw amino-acid sequence, 308 residues long: Taste receptor type 2 member 10 (308 aa).

Topologically, residues 1 to 6 (MLSVVE) are extracellular. Residues 7–27 (GIFIFVVISESVFGVLGNGFI) form a helical membrane-spanning segment. The Cytoplasmic portion of the chain corresponds to 28–42 (GLVNCIDCAKNKLST). The chain crosses the membrane as a helical span at residues 43–63 (IGFILTGLAISRIFLIWVIIT). The Extracellular segment spans residues 64-100 (DGFIQIFSPDIYASGNLIEYISYIWVIGNQSSMWFAT). Asn92 carries N-linked (GlcNAc...) asparagine glycosylation. Residues 101-121 (SLSIFYFLKIANFSNYIFLWL) traverse the membrane as a helical segment. Residues 122 to 126 (KSRTN) are Cytoplasmic-facing. The chain crosses the membrane as a helical span at residues 127–147 (MVLPFMMAFLLISSLLNFAHI). At 148-179 (VKILNDHKMKNDTVWHLNMYKSEYFIKQILLN) the chain is on the extracellular side. Asn158 carries N-linked (GlcNAc...) asparagine glycosylation. The chain crosses the membrane as a helical span at residues 180–200 (LGVIFFFTLSLITCVLLIISL). Topologically, residues 201-227 (WRHNRQMQSNVTGLRDSNTEAHVKAMK) are cytoplasmic. Residues 228–248 (VLISFIILFILYFIGMALEIS) form a helical membrane-spanning segment. At 249 to 257 (RFTVPENKL) the chain is on the extracellular side. A helical transmembrane segment spans residues 258–278 (LLMFGMTTTAIYPWGHSFILI). Topologically, residues 279-308 (LGNSKLKQASLRVLQQLKCCEKRKKSQSHI) are cytoplasmic.

This sequence belongs to the G-protein coupled receptor T2R family.

The protein resides in the membrane. Its function is as follows. Receptor that may play a role in the perception of bitterness and is gustducin-linked. May play a role in sensing the chemical composition of the gastrointestinal content. The activity of this receptor may stimulate alpha gustducin, mediate PLC-beta-2 activation and lead to the gating of TRPM5. The chain is Taste receptor type 2 member 10 (TAS2R10) from Pongo pygmaeus (Bornean orangutan).